The chain runs to 467 residues: ATP synthase subunit beta (467 aa).

150–157 (GGAGVGKT) serves as a coordination point for ATP.

This sequence belongs to the ATPase alpha/beta chains family. F-type ATPases have 2 components, CF(1) - the catalytic core - and CF(0) - the membrane proton channel. CF(1) has five subunits: alpha(3), beta(3), gamma(1), delta(1), epsilon(1). CF(0) has three main subunits: a(1), b(2) and c(9-12). The alpha and beta chains form an alternating ring which encloses part of the gamma chain. CF(1) is attached to CF(0) by a central stalk formed by the gamma and epsilon chains, while a peripheral stalk is formed by the delta and b chains.

The protein localises to the cell inner membrane. It catalyses the reaction ATP + H2O + 4 H(+)(in) = ADP + phosphate + 5 H(+)(out). Functionally, produces ATP from ADP in the presence of a proton gradient across the membrane. The catalytic sites are hosted primarily by the beta subunits. In Vibrio vulnificus (strain YJ016), this protein is ATP synthase subunit beta.